A 208-amino-acid chain; its full sequence is TM2 domain-containing protein 1 (208 aa).

An N-terminal signal peptide occupies residues 1–37; that stretch reads MAAAWPAGRASPAAGPPGLLRTLWLVTVAAGHCGAAA. Over 38 to 129 the chain is Extracellular; sequence SGAVGGEETP…YSYKVAVALS (92 aa). N-linked (GlcNAc...) asparagine glycans are attached at residues asparagine 73, asparagine 76, and asparagine 97. Residues 119–167 form the TM2 domain; sequence GYSYKVAVALSLFLGWLGADRFYLGYPALGLLKFCTVGFCGIGSLIDFI. A helical membrane pass occupies residues 130–150; it reads LFLGWLGADRFYLGYPALGLL. Residues 151-154 lie on the Cytoplasmic side of the membrane; that stretch reads KFCT. A helical membrane pass occupies residues 155-175; sequence VGFCGIGSLIDFILISMQIVG. Residues 176-208 are Extracellular-facing; it reads PSDGSSYIIDYYGTRLTRLSITNETFRKTQLYP. Asparagine 198 is a glycosylation site (N-linked (GlcNAc...) asparagine).

The protein belongs to the TM2 family. As to quaternary structure, interacts with APP beta-APP42 (amyloid-beta protein 42). N-glycosylated.

The protein localises to the membrane. Its function is as follows. May participate in amyloid-beta-induced apoptosis via its interaction with beta-APP42. This Mus musculus (Mouse) protein is TM2 domain-containing protein 1 (Tm2d1).